Here is a 1249-residue protein sequence, read N- to C-terminus: Protein lingerer (1249 aa).

The tract at residues 1-66 (MSTQTRSGGG…VVKAKQPTAE (66 aa)) is disordered. Composition is skewed to gly residues over residues 7-30 (SGGG…GAAG) and 38-50 (GSTG…GAGG). In terms of domain architecture, UBA spans 84–124 (KIQEKIQSLMETTQRSEEEVCCALQECDSDLDRAVIFLLET). Disordered regions lie at residues 132–312 (TTSK…LKPE), 350–375 (SAGA…ASNV), 454–506 (MPPM…PPTT), 549–579 (YAAA…AVEM), 616–717 (TTGT…TSVS), 738–922 (PYGQ…SLPI), 1016–1042 (GRFT…TGSG), 1124–1149 (QQQS…APSM), 1164–1186 (KQSF…AGTT), and 1211–1249 (QNMH…TGPN). Positions 186-209 (NRGGSGNQRSGGPGRGGRAGGYRD) are enriched in gly residues. The segment covering 210-227 (GGGDRDRDRDRNGYDKGG) has biased composition (basic and acidic residues). 2 stretches are compositionally biased toward gly residues: residues 228-240 (EGGG…GGDG) and 248-269 (DGPG…GGPR). Over residues 350-369 (SAGAGAQQQQSQQSTQTGVP) the composition is skewed to low complexity. Polar residues predominate over residues 457–494 (MNTSSSLSAEQSQYFSTLSSQNSNLQPTPSAVGFQQQP). Composition is skewed to low complexity over residues 549–559 (YAAAATQQPPV), 616–639 (TTGT…PATV), and 647–664 (QSQL…APQQ). Positions 678–705 (ASSQIMPGQGTTEALSSQNDGLANSYSR) are enriched in polar residues. Low complexity predominate over residues 706 to 717 (TNASGSVSTSVS). Composition is skewed to polar residues over residues 738–769 (PYGQ…TASY) and 777–809 (GYNN…NVNA). The segment covering 811 to 861 (QPPSSSVTNNVVPNNNTGNSVGGVSNQSNLPVNNNAVNSSSNNNAGGYLSS) has biased composition (low complexity). Polar residues predominate over residues 862–873 (QYPVSQTSSAFP). Composition is skewed to low complexity over residues 874 to 884 (SQQNYQNSSQN), 892 to 922 (NSNT…SLPI), and 1023 to 1034 (NNSSPVSNVPSS). Polar residues predominate over residues 1124–1138 (QQQSKGQTVANQQSG). Residues 1216–1249 (DSNSSGQRPQNNNQGKTASKQQGYSASTYWTGPN) are compositionally biased toward polar residues.

It is found in the cytoplasm. Functionally, acts in the nervous system to mediate the control of copulatory organs during courtship. The polypeptide is Protein lingerer (Anopheles gambiae (African malaria mosquito)).